A 279-amino-acid polypeptide reads, in one-letter code: Large ribosomal subunit protein uL2 (279 aa).

Disordered regions lie at residues 30-59 and 225-279; these read EKSL…GGHK and VMNP…KNKR. Basic residues predominate over residues 50 to 59; it reads TTRHKGGGHK. A compositionally biased stretch (basic and acidic residues) spans 253 to 268; it reads PEGRTRRPNKESDKLI. Over residues 269–279 the composition is skewed to basic residues; it reads VRRRRTGKNKR.

The protein belongs to the universal ribosomal protein uL2 family. As to quaternary structure, part of the 50S ribosomal subunit. Forms a bridge to the 30S subunit in the 70S ribosome.

Functionally, one of the primary rRNA binding proteins. Required for association of the 30S and 50S subunits to form the 70S ribosome, for tRNA binding and peptide bond formation. It has been suggested to have peptidyltransferase activity; this is somewhat controversial. Makes several contacts with the 16S rRNA in the 70S ribosome. The protein is Large ribosomal subunit protein uL2 of Kocuria rhizophila (strain ATCC 9341 / DSM 348 / NBRC 103217 / DC2201).